Consider the following 293-residue polypeptide: Neugrin (293 aa).

The first 18 residues, 1–18, serve as a signal peptide directing secretion; that stretch reads MALSLSLFLGGRVRTSLA. The residue at position 41 (serine 41) is a Phosphoserine. Disordered stretches follow at residues 177–210 and 224–254; these read DEVSSKSQNHSTALKVAKSHPHSTDAQKKREGRD and TTALGHQRELQKSATSDSEATGRAGSDTLPS. Asparagine 185 carries N-linked (GlcNAc...) asparagine glycosylation. Over residues 198–210 the composition is skewed to basic and acidic residues; it reads HSTDAQKKREGRD.

This sequence belongs to the neugrin family. Forms a regulatory protein-RNA complex, consisting of RCC1L, NGRN, RPUSD3, RPUSD4, TRUB2, FASTKD2 and 16S mt-rRNA. Interacts with 16S mt-rRNA; this interaction is direct. Expressed in heart, brain, liver and kidney. In brain, mainly expressed in neurons rather than glial cells.

The protein localises to the nucleus. The protein resides in the secreted. Its subcellular location is the mitochondrion membrane. In terms of biological role, plays an essential role in mitochondrial ribosome biogenesis. As a component of a functional protein-RNA module, consisting of RCC1L, NGRN, RPUSD3, RPUSD4, TRUB2, FASTKD2 and 16S mitochondrial ribosomal RNA (16S mt-rRNA), controls 16S mt-rRNA abundance and is required for intra-mitochondrial translation of core subunits of the oxidative phosphorylation system. The sequence is that of Neugrin (Ngrn) from Mus musculus (Mouse).